The chain runs to 203 residues: Inactive ribonuclease-like protein 9 (203 aa).

The first 25 residues, 1–25 (MRTPITTHSLLLLLLLQQLLQPVQL), serve as a signal peptide directing secretion. 3 disulfide bridges follow: C96/C151, C114/C166, and C121/C128. N-linked (GlcNAc...) asparagine glycosylation is found at N129 and N141.

This sequence belongs to the pancreatic ribonuclease family.

It localises to the secreted. Functionally, does not exhibit any ribonuclease activity. The protein is Inactive ribonuclease-like protein 9 (RNASE9) of Macaca assamensis (Assam macaque).